A 64-amino-acid polypeptide reads, in one-letter code: Cytochrome c oxidase subunit 5C (64 aa).

A helical transmembrane segment spans residues 16–34 (VVKELVIGFSLGLVAGGFW).

The protein belongs to the cytochrome c oxidase subunit 5C family. In terms of assembly, sweet potato cytochrome C oxidase consists of at least seven different polypeptides species, subunits I, II, III, IV, Va, Vb, and Vc in order of MW.

It localises to the mitochondrion inner membrane. This protein is one of the nuclear-coded polypeptide chains of cytochrome c oxidase, the terminal oxidase in mitochondrial electron transport. In Ipomoea batatas (Sweet potato), this protein is Cytochrome c oxidase subunit 5C (COX5C).